The primary structure comprises 81 residues: D-alanyl carrier protein (81 aa).

Positions 1 to 81 (MADEAIKNGV…KIIAKVEQAQ (81 aa)) constitute a Carrier domain. The residue at position 39 (serine 39) is an O-(pantetheine 4'-phosphoryl)serine.

It belongs to the DltC family. In terms of processing, 4'-phosphopantetheine is transferred from CoA to a specific serine of apo-DCP.

The protein resides in the cytoplasm. The protein operates within cell wall biogenesis; lipoteichoic acid biosynthesis. Functionally, carrier protein involved in the D-alanylation of lipoteichoic acid (LTA). The loading of thioester-linked D-alanine onto DltC is catalyzed by D-alanine--D-alanyl carrier protein ligase DltA. The DltC-carried D-alanyl group is further transferred to cell membrane phosphatidylglycerol (PG) by forming an ester bond, probably catalyzed by DltD. D-alanylation of LTA plays an important role in modulating the properties of the cell wall in Gram-positive bacteria, influencing the net charge of the cell wall. This Lacticaseibacillus rhamnosus (Lactobacillus rhamnosus) protein is D-alanyl carrier protein.